Reading from the N-terminus, the 253-residue chain is Phosphate import ATP-binding protein PstB 1 (253 aa).

The 242-residue stretch at Leu-7–Ile-248 folds into the ABC transporter domain. Gly-39–Ser-46 contributes to the ATP binding site.

It belongs to the ABC transporter superfamily. Phosphate importer (TC 3.A.1.7) family. The complex is composed of two ATP-binding proteins (PstB), two transmembrane proteins (PstC and PstA) and a solute-binding protein (PstS).

It is found in the cell membrane. The catalysed reaction is phosphate(out) + ATP + H2O = ADP + 2 phosphate(in) + H(+). Functionally, part of the ABC transporter complex PstSACB involved in phosphate import. Responsible for energy coupling to the transport system. The polypeptide is Phosphate import ATP-binding protein PstB 1 (Lactococcus lactis subsp. lactis (strain IL1403) (Streptococcus lactis)).